We begin with the raw amino-acid sequence, 289 residues long: Ribosomal RNA small subunit methyltransferase A (289 aa).

6 residues coordinate S-adenosyl-L-methionine: His-27, Leu-29, Gly-54, Glu-76, Asp-102, and Asn-123.

The protein belongs to the class I-like SAM-binding methyltransferase superfamily. rRNA adenine N(6)-methyltransferase family. RsmA subfamily.

Its subcellular location is the cytoplasm. It catalyses the reaction adenosine(1518)/adenosine(1519) in 16S rRNA + 4 S-adenosyl-L-methionine = N(6)-dimethyladenosine(1518)/N(6)-dimethyladenosine(1519) in 16S rRNA + 4 S-adenosyl-L-homocysteine + 4 H(+). Specifically dimethylates two adjacent adenosines (A1518 and A1519) in the loop of a conserved hairpin near the 3'-end of 16S rRNA in the 30S particle. May play a critical role in biogenesis of 30S subunits. The polypeptide is Ribosomal RNA small subunit methyltransferase A (Maricaulis maris (strain MCS10) (Caulobacter maris)).